Here is a 251-residue protein sequence, read N- to C-terminus: tRNA-cytidine(32) 2-sulfurtransferase 1 (251 aa).

Residues serine 33–serine 38 carry the PP-loop motif motif. Positions 108, 111, and 199 each coordinate [4Fe-4S] cluster.

It belongs to the TtcA family. Homodimer. The cofactor is Mg(2+). It depends on [4Fe-4S] cluster as a cofactor.

The protein resides in the cytoplasm. The catalysed reaction is cytidine(32) in tRNA + S-sulfanyl-L-cysteinyl-[cysteine desulfurase] + AH2 + ATP = 2-thiocytidine(32) in tRNA + L-cysteinyl-[cysteine desulfurase] + A + AMP + diphosphate + H(+). The protein operates within tRNA modification. Its function is as follows. Catalyzes the ATP-dependent 2-thiolation of cytidine in position 32 of tRNA, to form 2-thiocytidine (s(2)C32). The sulfur atoms are provided by the cysteine/cysteine desulfurase (IscS) system. In Francisella tularensis subsp. holarctica (strain FTNF002-00 / FTA), this protein is tRNA-cytidine(32) 2-sulfurtransferase 1.